The primary structure comprises 155 residues: MADVPKREVENVEFVFEVMGSPGEGIDAVDLGDALRALNLNPTLALIEKLGGTKKRNEKKIKLDEFLPIYSQVKKEKEQGCYEDFIECLKLYDKEENGTMMLAELQHALLALGESLDDEQVETLFADCMDPEDDEGFIPYSQFVQRLMSDPVVFD.

EF-hand domains follow at residues 7-41 and 80-115; these read REVE…LNLN and GCYE…LGES.

In terms of assembly, myosin is a hexamer of 2 heavy chains and 4 light chains.

The polypeptide is Myosin light chain alkali (Mlc1) (Drosophila simulans (Fruit fly)).